A 455-amino-acid chain; its full sequence is Bifunctional protein GlmU (455 aa).

The tract at residues 1–232 (MASTTGALIL…DPNLLGVNNP (232 aa)) is pyrophosphorylase. UDP-N-acetyl-alpha-D-glucosamine-binding positions include 10–13 (LAAG), K24, Q75, and 80–81 (GT). A Mg(2+)-binding site is contributed by D106. G141, E155, N172, and N230 together coordinate UDP-N-acetyl-alpha-D-glucosamine. N230 contributes to the Mg(2+) binding site. The interval 233-253 (AELIRSEALLRTRLVIGHIEG) is linker. The N-acetyltransferase stretch occupies residues 254 to 455 (GVLIHAPETV…QTNLPRKPKA (202 aa)). Residues R336 and K354 each contribute to the UDP-N-acetyl-alpha-D-glucosamine site. H366 serves as the catalytic Proton acceptor. The UDP-N-acetyl-alpha-D-glucosamine site is built by Y369 and N380. Acetyl-CoA contacts are provided by residues A383, 389 to 390 (NY), S408, A426, and R443.

The protein in the N-terminal section; belongs to the N-acetylglucosamine-1-phosphate uridyltransferase family. It in the C-terminal section; belongs to the transferase hexapeptide repeat family. Homotrimer. Requires Mg(2+) as cofactor.

The protein resides in the cytoplasm. It catalyses the reaction alpha-D-glucosamine 1-phosphate + acetyl-CoA = N-acetyl-alpha-D-glucosamine 1-phosphate + CoA + H(+). The enzyme catalyses N-acetyl-alpha-D-glucosamine 1-phosphate + UTP + H(+) = UDP-N-acetyl-alpha-D-glucosamine + diphosphate. Its pathway is nucleotide-sugar biosynthesis; UDP-N-acetyl-alpha-D-glucosamine biosynthesis; N-acetyl-alpha-D-glucosamine 1-phosphate from alpha-D-glucosamine 6-phosphate (route II): step 2/2. It participates in nucleotide-sugar biosynthesis; UDP-N-acetyl-alpha-D-glucosamine biosynthesis; UDP-N-acetyl-alpha-D-glucosamine from N-acetyl-alpha-D-glucosamine 1-phosphate: step 1/1. The protein operates within bacterial outer membrane biogenesis; LPS lipid A biosynthesis. Catalyzes the last two sequential reactions in the de novo biosynthetic pathway for UDP-N-acetylglucosamine (UDP-GlcNAc). The C-terminal domain catalyzes the transfer of acetyl group from acetyl coenzyme A to glucosamine-1-phosphate (GlcN-1-P) to produce N-acetylglucosamine-1-phosphate (GlcNAc-1-P), which is converted into UDP-GlcNAc by the transfer of uridine 5-monophosphate (from uridine 5-triphosphate), a reaction catalyzed by the N-terminal domain. The polypeptide is Bifunctional protein GlmU (Nitratidesulfovibrio vulgaris (strain DP4) (Desulfovibrio vulgaris)).